Reading from the N-terminus, the 615-residue chain is DNA mismatch repair protein MutL (615 aa).

The tract at residues 363-397 (FAEPAAREPVAPRYTPAPASGSRPAAPWPNAQPGY) is disordered. Residues 364–391 (AEPAAREPVAPRYTPAPASGSRPAAPWP) show a composition bias toward low complexity.

The protein belongs to the DNA mismatch repair MutL/HexB family.

Functionally, this protein is involved in the repair of mismatches in DNA. It is required for dam-dependent methyl-directed DNA mismatch repair. May act as a 'molecular matchmaker', a protein that promotes the formation of a stable complex between two or more DNA-binding proteins in an ATP-dependent manner without itself being part of a final effector complex. The polypeptide is DNA mismatch repair protein MutL (Shigella boydii serotype 18 (strain CDC 3083-94 / BS512)).